The following is a 745-amino-acid chain: Eukaryotic translation initiation factor 3 subunit B (745 aa).

Residues 41 to 129 (DVIVIEGVPV…HRFSVHRFTD (89 aa)) enclose the RRM domain. WD repeat units lie at residues 189 to 230 (EHSR…RFMR), 251 to 293 (WSHE…RSFP), 303 to 344 (GQLK…LLEK), and 580 to 625 (GEHY…LQKH). The stretch at 644-745 (GKDEQKRVRK…IIEETEEVLA (102 aa)) forms a coiled coil.

Belongs to the eIF-3 subunit B family. In terms of assembly, component of the eukaryotic translation initiation factor 3 (eIF-3) complex.

The protein resides in the cytoplasm. In terms of biological role, RNA-binding component of the eukaryotic translation initiation factor 3 (eIF-3) complex, which is involved in protein synthesis of a specialized repertoire of mRNAs and, together with other initiation factors, stimulates binding of mRNA and methionyl-tRNAi to the 40S ribosome. The eIF-3 complex specifically targets and initiates translation of a subset of mRNAs involved in cell proliferation. The protein is Eukaryotic translation initiation factor 3 subunit B of Mycosarcoma maydis (Corn smut fungus).